A 620-amino-acid polypeptide reads, in one-letter code: MALLQISEPGQSPNPHQRRIAVGIDLGTTHSLVAAVRNGAAECLPDAEGRLLLPSVVRYLPQGRRQIGYAAMDSRSEDAANTLVSVKRFMGRGLKDIDHPERLPYAFVPGQEGDMVAMQTVDGVKSPVEVSAEILAELRHRAEDTFDEDLYGAVITVPAYFDDAQRQATKDAARLAGLNLLRLINEPTAAAIAYGLDNASEGVYAVYDLGGGTFDISILRLTQGVFEVIATGGDSALGGDDYDAVLAEWALQRLGIRAESAQDKAAARIAARACKEGLTAAESALFSARIGGNEVRLDVLRGDFDAITSALTERTLAAVRRALRDARLQREDIQGVVMVGGSTRMPQIQRAVAAFFGTEPLNNLNPDEVVALGAAIQAHQLAGNDPAGDMLLLDVIPLSLGIETMGGLVERIISRNETIPTAKAQDFTTYKDGQTALAIHVVQGERDLVADCRSLARFELRGIPPMAAGAARIRVTFTVDADGLLGVSAREQSTGVEARVDVKPSYGLSDDQIARMLQEGFATAGEDMRARALVEARVEADRMLMATRTALEADGDILPPGERQSIDVLVQALEAVREHEDASAIDAATQALARGTEAFAARRMNRGIQQALAGKSVQSL.

It belongs to the heat shock protein 70 family.

In terms of biological role, chaperone involved in the maturation of iron-sulfur cluster-containing proteins. Has a low intrinsic ATPase activity which is markedly stimulated by HscB. This is Chaperone protein HscA homolog from Paracidovorax citrulli (strain AAC00-1) (Acidovorax citrulli).